Here is a 312-residue protein sequence, read N- to C-terminus: Malate dehydrogenase (312 aa).

Residues 7 to 13 (GAAGGIG) and D34 each bind NAD(+). 2 residues coordinate substrate: R81 and R87. NAD(+) contacts are provided by residues N94 and 117 to 119 (ITN). Residues N119 and R153 each contribute to the substrate site. Residue H177 is the Proton acceptor of the active site. M227 serves as a coordination point for NAD(+).

It belongs to the LDH/MDH superfamily. MDH type 1 family. As to quaternary structure, homodimer.

The enzyme catalyses (S)-malate + NAD(+) = oxaloacetate + NADH + H(+). Functionally, catalyzes the reversible oxidation of malate to oxaloacetate. This chain is Malate dehydrogenase, found in Pectobacterium carotovorum subsp. carotovorum (strain PC1).